The following is a 154-amino-acid chain: Myoglobin (154 aa).

A Globin domain is found at 2–148 (GLSDGEWQLV…FRNDIAAKYK (147 aa)). S4 carries the phosphoserine modification. H65 provides a ligand contact to nitrite. H65 is an O2 binding site. Residue T68 is modified to Phosphothreonine. H94 is a heme b binding site.

This sequence belongs to the globin family. In terms of assembly, monomeric.

The protein resides in the cytoplasm. It localises to the sarcoplasm. It carries out the reaction Fe(III)-heme b-[protein] + nitric oxide + H2O = Fe(II)-heme b-[protein] + nitrite + 2 H(+). The catalysed reaction is H2O2 + AH2 = A + 2 H2O. Functionally, monomeric heme protein which primary function is to store oxygen and facilitate its diffusion within muscle tissues. Reversibly binds oxygen through a pentacoordinated heme iron and enables its timely and efficient release as needed during periods of heightened demand. Depending on the oxidative conditions of tissues and cells, and in addition to its ability to bind oxygen, it also has a nitrite reductase activity whereby it regulates the production of bioactive nitric oxide. Under stress conditions, like hypoxia and anoxia, it also protects cells against reactive oxygen species thanks to its pseudoperoxidase activity. The polypeptide is Myoglobin (MB) (Erinaceus europaeus (Western European hedgehog)).